The sequence spans 384 residues: 4-hydroxy-3-methylbut-2-en-1-yl diphosphate synthase (flavodoxin) (384 aa).

Cysteine 280, cysteine 283, cysteine 315, and glutamate 322 together coordinate [4Fe-4S] cluster.

The protein belongs to the IspG family. The cofactor is [4Fe-4S] cluster.

It catalyses the reaction (2E)-4-hydroxy-3-methylbut-2-enyl diphosphate + oxidized [flavodoxin] + H2O + 2 H(+) = 2-C-methyl-D-erythritol 2,4-cyclic diphosphate + reduced [flavodoxin]. It participates in isoprenoid biosynthesis; isopentenyl diphosphate biosynthesis via DXP pathway; isopentenyl diphosphate from 1-deoxy-D-xylulose 5-phosphate: step 5/6. Functionally, converts 2C-methyl-D-erythritol 2,4-cyclodiphosphate (ME-2,4cPP) into 1-hydroxy-2-methyl-2-(E)-butenyl 4-diphosphate. This chain is 4-hydroxy-3-methylbut-2-en-1-yl diphosphate synthase (flavodoxin), found in Frankia alni (strain DSM 45986 / CECT 9034 / ACN14a).